A 289-amino-acid polypeptide reads, in one-letter code: Aquaporin PIP1-1 (289 aa).

The interval 1-36 (MEGKEEDVRLGANRYSERQPIGTAAQGAGDDKDYKE) is disordered. 2 helical membrane-spanning segments follow: residues 58 to 78 (IAEFVATFLFLYITILTVMGV) and 93 to 115 (IAWSFGGMIFALVYCTAGISGGH). The NPA 1 motif lies at 117 to 119 (NPA). Helical transmembrane passes span 136-156 (IFYIVMQCLGAICGAGVVKGF), 178-198 (GDGLGAEIVGTFILVYTVFSA), and 212-232 (ILAPLPIGFAVFLVHLATIPI). The NPA 2 signature appears at 238–240 (NPA). Residues 260-280 (IFWVGPFVGAALAAIYHQVII) form a helical membrane-spanning segment.

Belongs to the MIP/aquaporin (TC 1.A.8) family. PIP (TC 1.A.8.11) subfamily. Expressed in roots, leaves and anthers.

The protein localises to the cell membrane. Its function is as follows. May function as water channel to facilitate the transport of water across cell membrane. This chain is Aquaporin PIP1-1 (PIP1-1), found in Oryza sativa subsp. japonica (Rice).